The chain runs to 129 residues: Biogenesis of lysosome-related organelles complex 1 subunit CNL1 (129 aa).

Belongs to the BLOC1S4 family. In terms of assembly, component of the biogenesis of lysosome-related organelles complex-1 (BLOC-1).

It is found in the cytoplasm. Component of the biogenesis of lysosome-related organelles complex-1 (BLOC-1), a complex that is involved in endosomal cargo sorting. The polypeptide is Biogenesis of lysosome-related organelles complex 1 subunit CNL1 (CLN1) (Eremothecium gossypii (strain ATCC 10895 / CBS 109.51 / FGSC 9923 / NRRL Y-1056) (Yeast)).